Consider the following 219-residue polypeptide: Orotate phosphoribosyltransferase (219 aa).

K26 is a binding site for 5-phospho-alpha-D-ribose 1-diphosphate. 34 to 35 (FF) contacts orotate. Residues 72–73 (YK), R98, K99, K102, H104, and 124–132 (DDVITAGTA) each bind 5-phospho-alpha-D-ribose 1-diphosphate. Residues T128 and R156 each coordinate orotate.

This sequence belongs to the purine/pyrimidine phosphoribosyltransferase family. PyrE subfamily. Homodimer. It depends on Mg(2+) as a cofactor.

It carries out the reaction orotidine 5'-phosphate + diphosphate = orotate + 5-phospho-alpha-D-ribose 1-diphosphate. It participates in pyrimidine metabolism; UMP biosynthesis via de novo pathway; UMP from orotate: step 1/2. Functionally, catalyzes the transfer of a ribosyl phosphate group from 5-phosphoribose 1-diphosphate to orotate, leading to the formation of orotidine monophosphate (OMP). This is Orotate phosphoribosyltransferase from Xanthomonas euvesicatoria pv. vesicatoria (strain 85-10) (Xanthomonas campestris pv. vesicatoria).